Here is a 46-residue protein sequence, read N- to C-terminus: Photosystem II reaction center protein K (46 aa).

The propeptide occupies 1-9 (MIDALVLVA). Over 10–19 (KLPEAYAIFD) the chain is Lumenal. Residues 20–39 (PLVDVLPVIPVLFLALAFVW) traverse the membrane as a helical segment. Residues 40-46 (QAAVGFR) lie on the Cytoplasmic side of the membrane.

The protein belongs to the PsbK family. In terms of assembly, PSII is composed of 1 copy each of membrane proteins PsbA, PsbB, PsbC, PsbD, PsbE, PsbF, PsbH, PsbI, PsbJ, PsbK, PsbL, PsbM, PsbT, PsbX, PsbY, PsbZ, Psb30/Ycf12, peripheral proteins PsbO, CyanoQ(PsbQ), PsbU, PsbV and a large number of cofactors. It forms dimeric complexes. Part of a photosystem II (PSII) assembly intermediate complex PSII-I; crystallized from a strain deleted of psbJ, it forms monomeric PSII before addition of the oxygen evolving complex. PSII-I includes 3 assembly factors not found in mature PSII (Psb27, Psb28 and Psb34). Requires PSII binds multiple chlorophylls, carotenoids and specific lipids. as cofactor.

It is found in the cellular thylakoid membrane. Functionally, one of the components of the core complex of photosystem II (PSII). PSII is a light-driven water:plastoquinone oxidoreductase that uses light energy to abstract electrons from H(2)O, generating O(2) and a proton gradient subsequently used for ATP formation. It consists of a core antenna complex that captures photons, and an electron transfer chain that converts photonic excitation into a charge separation. Required for association of PsbZ and Psb30/Ycf12 with PSII. This is Photosystem II reaction center protein K from Thermosynechococcus vestitus (strain NIES-2133 / IAM M-273 / BP-1).